A 171-amino-acid polypeptide reads, in one-letter code: S-ribosylhomocysteine lyase (171 aa).

3 residues coordinate Fe cation: H54, H58, and C128.

The protein belongs to the LuxS family. As to quaternary structure, homodimer. Fe cation serves as cofactor.

It catalyses the reaction S-(5-deoxy-D-ribos-5-yl)-L-homocysteine = (S)-4,5-dihydroxypentane-2,3-dione + L-homocysteine. Involved in the synthesis of autoinducer 2 (AI-2) which is secreted by bacteria and is used to communicate both the cell density and the metabolic potential of the environment. The regulation of gene expression in response to changes in cell density is called quorum sensing. Catalyzes the transformation of S-ribosylhomocysteine (RHC) to homocysteine (HC) and 4,5-dihydroxy-2,3-pentadione (DPD). The sequence is that of S-ribosylhomocysteine lyase from Serratia proteamaculans (strain 568).